The sequence spans 325 residues: MDLAAIYKSLLSLSPELPSDLGETESSTSWASSGPWSLSSSDSSLPEAAARLPGRSTSLVEGRSCGWVPPPPGFAPLAPRPSSELSPSPTSPTATPTTSSRYKTELCRTFSESGRCRYGAKCQFAHGLGELRQPSRHPKYKTELCHKFYLQGRCPYGSRCHFIHNPSEDLAAPGHPHVLRQSISFSGLPSGRRTSPPPASLAGPSVPSWSFSPSSSPPPPPGDLPLSPSAFSAAPGTPVSRRDPTPACCPSCRRATPNSVWGPVGGLARSPSAHSLGSDPDEYASSGSSLGGSDSPVFEAGVFGPPQPPAAPRRLPIFNRISVSE.

The interval Met1–Pro15 is necessary for nuclear export. The necessary and sufficient for the association with mRNA decay enzymes and mRNA decay activation stretch occupies residues Met1 to Thr98. Necessary for localization of ARE-containing mRNAs to processing bodies (PBs) regions lie at residues Met1–Ala172 and Thr98–Glu325. Over residues Pro15 to Ala48 the composition is skewed to low complexity. A disordered region spans residues Pro15 to Arg101. Ser58 is modified (phosphoserine; by MAPKAPK2). Position 64 is a phosphoserine (Ser64). The stretch at Pro69–Gly73 is one P-P-P-P-G repeat. Residues Ala75–Arg101 show a composition bias toward low complexity. Residues Ser86 and Ser88 each carry the phosphoserine modification. Residue Thr90 is modified to Phosphothreonine. Ser91 is subject to Phosphoserine. The segment at Thr93 to Pro166 is necessary for nuclear localization. The necessary for RNA-binding stretch occupies residues Thr95–Ala171. C3H1-type zinc fingers lie at residues Arg101–Gly129 and Lys139–Ser167. The necessary for interaction with PABPN1 stretch occupies residues Arg101–Arg192. Position 167 is a phosphoserine (Ser167). A necessary for mRNA decay activation region spans residues Ala172–Glu325. Ser184 is subject to Phosphoserine; by MAPKAPK2. 2 disordered regions span residues Phe185–Cys248 and Val260–Glu325. Ser195 is modified (phosphoserine). A P-P-P-P-G repeat occupies Pro196–Ser200. Positions Pro204 to Ser214 are enriched in low complexity. Phosphoserine is present on Ser216. One copy of the P-P-P-P-G repeat lies at Pro217–Gly222. Ser227 carries the post-translational modification Phosphoserine; by MAPK1; in vitro. Residues Ser275, Ser295, and Ser322 each carry the phosphoserine modification. A compositionally biased stretch (low complexity) spans Ser285–Ser295. An interaction with CNOT1 region spans residues Ala311 to Glu325.

In terms of assembly, associates with cytoplasmic CCR4-NOT and PAN2-PAN3 deadenylase complexes to trigger ARE-containing mRNA deadenylation and decay processes. Part of a mRNA decay activation complex at least composed of poly(A)-specific exoribonucleases CNOT6, EXOSC2 and XRN1 and mRNA-decapping enzymes DCP1A and DCP2. Associates with the RNA exosome complex. Interacts (via phosphorylated form) with 14-3-3 proteins; these interactions promote exclusion of ZFP36 from cytoplasmic stress granules in response to arsenite treatment in a MAPKAPK2-dependent manner and does not prevent CCR4-NOT deadenylase complex recruitment or ZFP36-induced ARE-containing mRNA deadenylation and decay processes. Interacts with 14-3-3 proteins; these interactions occur in response to rapamycin in an Akt-dependent manner. Interacts with AGO2 and AGO4. Interacts (via C-terminus) with CNOT1; this interaction occurs in a RNA-independent manner and induces mRNA deadenylation. Interacts (via N-terminus) with CNOT6. Interacts with CNOT6L. Interacts (via C-terminus) with CNOT7; this interaction occurs in a RNA-independent manner, induces mRNA deadenylation and is inhibited in a phosphorylation MAPKAPK2-dependent manner. Interacts (via unphosphorylated form) with CNOT8; this interaction occurs in a RNA-independent manner and is inhibited in a phosphorylation MAPKAPK2-dependent manner. Interacts with DCP1A. Interacts (via N-terminus) with DCP2. Interacts with EDC3. Interacts (via N-terminus) with EXOSC2. Interacts with heat shock 70 kDa proteins. Interacts with KHSRP; this interaction increases upon cytokine-induced treatment. Interacts with MAP3K4; this interaction enhances the association with SH3KBP1/CIN85. Interacts with MAPKAPK2; this interaction occurs upon skeletal muscle satellite cell activation. Interacts with NCL. Interacts with NUP214; this interaction increases upon lipopolysaccharide (LPS) stimulation. Interacts with PABPC1; this interaction occurs in a RNA-dependent manner. Interacts (via hypophosphorylated form) with PABPN1 (via RRM domain and C-terminal arginine-rich region); this interaction occurs in the nucleus in a RNA-independent manner, decreases in presence of single-stranded poly(A) RNA-oligomer and in a p38 MAPK-dependent-manner and inhibits nuclear poly(A) tail synthesis. Interacts with PAN2. Interacts (via C3H1-type zinc finger domains) with PKM. Interacts (via C3H1-type zinc finger domains) with nuclear RNA poly(A) polymerase. Interacts with PPP2CA; this interaction occurs in LPS-stimulated cells and induces ZFP36 dephosphorylation, and hence may promote ARE-containing mRNAs decay. Interacts (via C-terminus) with PRR5L (via C-terminus); this interaction may accelerate ZFP36-mediated mRNA decay during stress. Interacts (via C-terminus) with SFN; this interaction occurs in a phosphorylation-dependent manner. Interacts (via extreme C-terminal region) with SH3KBP1/CIN85 (via SH3 domains); this interaction enhances MAP3K4-induced phosphorylation of ZFP36 at Ser-64 and Ser-91 and does not alter neither ZFP36 binding to ARE-containing transcripts nor TNF-alpha mRNA decay. Interacts with XRN1. Interacts (via C-terminus and Ser-184 phosphorylated form) with YWHAB; this interaction occurs in a p38/MAPKAPK2-dependent manner, increases cytoplasmic localization of ZFP36 and protects ZFP36 from Ser-184 dephosphorylation by serine/threonine phosphatase 2A, and hence may be crucial for stabilizing ARE-containing mRNAs. Interacts (via phosphorylated form) with YWHAE. Interacts (via C-terminus) with YWHAG; this interaction occurs in a phosphorylation-dependent manner. Interacts with YWHAH; this interaction occurs in a phosphorylation-dependent manner. Interacts with YWHAQ; this interaction occurs in a phosphorylation-dependent manner. Interacts with (via C-terminus) YWHAZ; this interaction occurs in a phosphorylation-dependent manner. Does not interact with SH3KBP1. Interacts (via P-P-P-P-G repeats) with GIGYF2; the interaction is direct. Phosphorylated. Phosphorylation at serine and/or threonine residues occurs in a p38 MAPK- and MAPKAPK2-dependent manner. Phosphorylated by MAPKAPK2 at Ser-58 and Ser-184; phosphorylation increases its stability and cytoplasmic localization, promotes binding to 14-3-3 adapter proteins and inhibits the recruitment of cytoplasmic CCR4-NOT and PAN2-PAN3 deadenylase complexes to the mRNA decay machinery, thereby inhibiting ZFP36-induced ARE-containing mRNA deadenylation and decay processes. Phosphorylation by MAPKAPK2 does not impair ARE-containing RNA-binding. Phosphorylated in a MAPKAPK2- and p38 MAPK-dependent manner upon skeletal muscle satellite cell activation; this phosphorylation inhibits ZFP36-mediated mRNA decay activity, and hence stabilizes MYOD1 mRNA. Phosphorylated by MAPK1 upon mitogen stimulation. Phosphorylated at Ser-64 and Ser-91; these phosphorylations increase in a SH3KBP1-dependent manner. Phosphorylated at serine and threonine residues in a pyruvate kinase PKM- and p38 MAPK-dependent manner. Phosphorylation at Ser-58 may participate in the PKM-mediated degradation of ZFP36 in a p38 MAPK-dependent manner. Dephosphorylated by serine/threonine phosphatase 2A at Ser-184. In terms of processing, ubiquitinated; pyruvate kinase (PKM)-dependent ubiquitination leads to proteasomal degradation through a p38 MAPK signaling pathway.

The protein localises to the nucleus. It is found in the cytoplasm. It localises to the cytoplasmic granule. The protein resides in the P-body. In terms of biological role, zinc-finger RNA-binding protein that destabilizes numerous cytoplasmic AU-rich element (ARE)-containing mRNA transcripts by promoting their poly(A) tail removal or deadenylation, and hence provide a mechanism for attenuating protein synthesis. Acts as an 3'-untranslated region (UTR) ARE mRNA-binding adapter protein to communicate signaling events to the mRNA decay machinery. Recruits deadenylase CNOT7 (and probably the CCR4-NOT complex) via association with CNOT1, and hence promotes ARE-mediated mRNA deadenylation. Also functions by recruiting components of the cytoplasmic RNA decay machinery to the bound ARE-containing mRNAs. Self regulates by destabilizing its own mRNA. Binds to 3'-UTR ARE of numerous mRNAs. Also binds to ARE of its own mRNA. Plays a role in anti-inflammatory responses; suppresses tumor necrosis factor (TNF)-alpha production by stimulating ARE-mediated TNF-alpha mRNA decay and several other inflammatory ARE-containing mRNAs in interferon (IFN)- and/or lipopolysaccharide (LPS)-induced macrophages. Also plays a role in the regulation of dendritic cell maturation at the post-transcriptional level, and hence operates as part of a negative feedback loop to limit the inflammatory response. Promotes ARE-mediated mRNA decay of hypoxia-inducible factor HIF1A mRNA during the response of endothelial cells to hypoxia. Positively regulates early adipogenesis of preadipocytes by promoting ARE-mediated mRNA decay of immediate early genes (IEGs). Negatively regulates hematopoietic/erythroid cell differentiation by promoting ARE-mediated mRNA decay of the transcription factor STAT5B mRNA. Plays a role in maintaining skeletal muscle satellite cell quiescence by promoting ARE-mediated mRNA decay of the myogenic determination factor MYOD1 mRNA. Also associates with and regulates the expression of non-ARE-containing target mRNAs at the post-transcriptional level, such as MHC class I mRNAs. Participates in association with argonaute RISC catalytic components in the ARE-mediated mRNA decay mechanism; assists microRNA (miRNA) targeting ARE-containing mRNAs. May also play a role in the regulation of cytoplasmic mRNA decapping; enhances decapping of ARE-containing RNAs, in vitro. Involved in the delivery of target ARE-mRNAs to processing bodies (PBs). In addition to its cytosolic mRNA-decay function, affects nuclear pre-mRNA processing. Negatively regulates nuclear poly(A)-binding protein PABPN1-stimulated polyadenylation activity on ARE-containing pre-mRNA during LPS-stimulated macrophages. Also involved in the regulation of stress granule (SG) and P-body (PB) formation and fusion. Plays a role in the regulation of keratinocyte proliferation, differentiation and apoptosis. Plays a role as a tumor suppressor by inhibiting cell proliferation in breast cancer cells. The protein is mRNA decay activator protein ZFP36 of Ovis aries (Sheep).